Here is a 676-residue protein sequence, read N- to C-terminus: tRNA 5-methylaminomethyl-2-thiouridine biosynthesis bifunctional protein MnmC (676 aa).

Residues 1–241 (MFTVTPAKIY…KRECLCGIKN (241 aa)) form a tRNA (mnm(5)s(2)U34)-methyltransferase region. Residues 268 to 676 (IGGGIASLFT…RKLLKGTEIK (409 aa)) form an FAD-dependent cmnm(5)s(2)U34 oxidoreductase region.

The protein in the N-terminal section; belongs to the methyltransferase superfamily. tRNA (mnm(5)s(2)U34)-methyltransferase family. It in the C-terminal section; belongs to the DAO family. FAD is required as a cofactor.

It localises to the cytoplasm. The enzyme catalyses 5-aminomethyl-2-thiouridine(34) in tRNA + S-adenosyl-L-methionine = 5-methylaminomethyl-2-thiouridine(34) in tRNA + S-adenosyl-L-homocysteine + H(+). Catalyzes the last two steps in the biosynthesis of 5-methylaminomethyl-2-thiouridine (mnm(5)s(2)U) at the wobble position (U34) in tRNA. Catalyzes the FAD-dependent demodification of cmnm(5)s(2)U34 to nm(5)s(2)U34, followed by the transfer of a methyl group from S-adenosyl-L-methionine to nm(5)s(2)U34, to form mnm(5)s(2)U34. The sequence is that of tRNA 5-methylaminomethyl-2-thiouridine biosynthesis bifunctional protein MnmC from Histophilus somni (strain 2336) (Haemophilus somnus).